A 258-amino-acid chain; its full sequence is Spectinomycin 9-adenylyltransferase (258 aa).

The catalysed reaction is spectinomycin + ATP = 9-O-adenylylspectinomycin + diphosphate. In terms of biological role, mediates bacterial resistance to spectinomycin, is probably a spectinomycin 9-adenylyltransferase. This Campylobacter jejuni protein is Spectinomycin 9-adenylyltransferase.